Consider the following 162-residue polypeptide: uncharacterized protein (162 aa).

The 77-residue stretch at 78 to 154 folds into the PUA domain; the sequence is KNLVVVDIGA…KAIKNLHYVG (77 aa).

This is an uncharacterized protein from Methanocaldococcus jannaschii (strain ATCC 43067 / DSM 2661 / JAL-1 / JCM 10045 / NBRC 100440) (Methanococcus jannaschii).